The following is a 728-amino-acid chain: Beta-porphyranase A (728 aa).

A signal peptide spans 1-22 (MSYKYIFLLSAFTLGVPPGIYC). Residues histidine 53, lysine 76, tryptophan 78, lysine 87, histidine 114, and asparagine 151 each coordinate substrate. Glutamate 152 functions as the Proton donor in the catalytic mechanism. Substrate-binding residues include histidine 235, glutamate 279, serine 326, and tryptophan 331. The active-site Nucleophile is the glutamate 279. Residues 599-701 (TLQNGTFSEG…AVSFDFNSTV (103 aa)) form the CBM-cenC domain.

Belongs to the glycosyl hydrolase 86 family.

The catalysed reaction is Hydrolysis of beta-D-galactopyranose-(1-&gt;4)-alpha-L-galactopyranose-6-sulfate linkages in porphyran.. In terms of biological role, cleaves the sulfated polysaccharide porphyran at the (1-&gt;4) linkages between beta-D-galactopyranose and alpha-L-galactopyranose-6-sulfate, forming mostly the disaccharide alpha-L-galactopyranose-6-sulfate-(1-&gt;3)-beta-D-galactose. Some longer oligosaccharides of even number of residues are also observed. Inactive on the non-sulfated agarose portion of the porphyran backbone. Can also use methylated galactoses. The protein is Beta-porphyranase A of Phocaeicola plebeius (strain DSM 17135 / JCM 12973 / CCUG 54634 / M2) (Bacteroides plebeius).